Consider the following 123-residue polypeptide: Small ribosomal subunit protein uS13 (123 aa).

The interval 97–123 (PVRGQRTHTNAKTRKGRSRLPVAAKKK) is disordered.

The protein belongs to the universal ribosomal protein uS13 family. Part of the 30S ribosomal subunit. Forms a loose heterodimer with protein S19. Forms two bridges to the 50S subunit in the 70S ribosome.

Located at the top of the head of the 30S subunit, it contacts several helices of the 16S rRNA. In the 70S ribosome it contacts the 23S rRNA (bridge B1a) and protein L5 of the 50S subunit (bridge B1b), connecting the 2 subunits; these bridges are implicated in subunit movement. Contacts the tRNAs in the A and P-sites. This Ehrlichia ruminantium (strain Gardel) protein is Small ribosomal subunit protein uS13.